Consider the following 541-residue polypeptide: Methyl-accepting chemotaxis protein PcaY (541 aa).

Topologically, residues 1–10 (MLANLKIRTG) are cytoplasmic. Residues 11 to 31 (MFWVLSLFSLTLLFSTASAWW) traverse the membrane as a helical segment. Residues 32 to 189 (AAVGSDQQIT…ESDRRLARAQ (158 aa)) are Periplasmic-facing. The segment at 35–187 (GSDQQITELD…MLESDRRLAR (153 aa)) is ligand-binding domain. A helical transmembrane segment spans residues 190-210 (LLSLCLLGMTVVLAVLCWAFI). Topologically, residues 211–541 (AQRVLHPLRE…MTALVGRFKV (331 aa)) are cytoplasmic. Residues 212–264 (QRVLHPLREAGGHFRRIASGDLSVPVQGQGNNEIGQLFHELQRMQQSQRDTLG) enclose the HAMP domain. Residues 269 to 505 (CARQLDAAAS…EVDRNLLNIR (237 aa)) enclose the Methyl-accepting transducer domain. Positions 322–341 (TSQTTSESNQLAAQSRRQVS) are disordered.

Belongs to the methyl-accepting chemotaxis (MCP) protein family.

The protein localises to the cell inner membrane. In terms of biological role, chemotactic-signal transducers respond to changes in the concentration of attractants and repellents in the environment, transduce a signal from the outside to the inside of the cell, and facilitate sensory adaptation through the variation of the level of methylation. PcaY is responsible for the detection of multiple aromatic and hydroaromatic compounds that are metabolized through the beta-ketoadipate catabolic pathway, including vanillin, vanillate, 4-hydroxybenzoate (4-HBA), benzoate and protocatechuate. It also senses several nonmetabolizable aromatic compounds. This is Methyl-accepting chemotaxis protein PcaY from Pseudomonas putida (strain ATCC 700007 / DSM 6899 / JCM 31910 / BCRC 17059 / LMG 24140 / F1).